We begin with the raw amino-acid sequence, 1734 residues long: Protein TIC 214 (1734 aa).

The next 6 membrane-spanning stretches (helical) occupy residues 19 to 39 (IINS…FSIG), 68 to 88 (FIAG…HLAL), 91 to 111 (PHTI…WNNH), 133 to 153 (VFLN…SSML), 176 to 196 (VGWL…LVWI), and 227 to 247 (IFSI…PSPI). Positions 1433-1485 (NLNNEEKELADEVELESDNEKQINPESALSNQEKTIQEIYAESKKKKRQNKKQ) form a coiled coil.

This sequence belongs to the TIC214 family. In terms of assembly, part of the Tic complex.

The protein localises to the plastid. Its subcellular location is the chloroplast inner membrane. Functionally, involved in protein precursor import into chloroplasts. May be part of an intermediate translocation complex acting as a protein-conducting channel at the inner envelope. In Lepidium virginicum (Virginia pepperweed), this protein is Protein TIC 214.